The sequence spans 194 residues: Cytochrome b-245 light chain (194 aa).

Residues 2–7 (GQIEWA) are Cytoplasmic-facing. A helical transmembrane segment spans residues 8–30 (MWANEQALASGLILVAGGIVATA). Topologically, residues 31 to 35 (GRFTQ) are extracellular. A helical transmembrane segment spans residues 36-53 (WYFGTYAIAAGVLVCLLE). The Cytoplasmic segment spans residues 54-69 (YPRGSRAKGSTLERCG). An intramembrane segment occupies 70-80 (QRYLTAVLKLL). The Cytoplasmic segment spans residues 81 to 86 (GPLSRN). A helical transmembrane segment spans residues 87 to 104 (YYFRAALHLALSVPAGFL). Residue leucine 105 is a topological domain, extracellular. The chain crosses the membrane as a helical span at residues 106 to 126 (ATILGTVCLVIASIIYLLAAV). Residues 127–194 (RGEQWTPIEP…NPIPVTDEVV (68 aa)) lie on the Cytoplasmic side of the membrane. The segment at 134–194 (IEPRPKERPQ…NPIPVTDEVV (61 aa)) is disordered. A Phosphothreonine modification is found at threonine 147. Lysine 149 is covalently cross-linked (Glycyl lysine isopeptide (Lys-Gly) (interchain with G-Cter in ubiquitin)).

Belongs to the p22phox family. Component of the phagocyte NADPH oxidase core complex/cytochrome b558 complex, composed of CYBB (heavy chain (beta)) and CYBA (light chain (alpha)). Component of the phagocyte NADPH oxidase complex composed of an obligatory core heterodimer formed by the membrane proteins CYBA and CYBB and the cytosolic regulatory subunits NCF1/p47-phox, NCF2/p67-phox, NCF4/p40-phox and the small GTPase RAC1 or RAC2. Interacts with NCF1 (via SH3 domain). Interacts with SH3PXD2A. Interacts with DUOX1, DUOX2 and TPO. Interacts with NOX4; this interaction mediates superoxide generation. Interacts with calprotectin (S100A8/9). Interacts with GBP7. Interacts with NOXO1. Forms a heterodimer with NOX3 and is essential for activity and cell membrane localization of NOX3. Interacts with NOX1. Post-translationally, phosphorylation at Thr-147 enhances NADPH oxidase activity by promoting NCF1/p47-phox binding. Ubiquitinated at Lys-149 likely by RNF145.

It localises to the cell membrane. Its function is as follows. Subunit of NADPH oxidase complexes that is required for the NADPH oxidase activity that generates, in various cell types, superoxide from molecular oxygen utilizing NADPH as an electron donor. Subunit of the phagocyte NADPH oxidase complex that mediates the transfer of electrons from cytosolic NADPH to O2 to produce the superoxide anion (O2(-)). In the activated complex, electrons are first transferred from NADPH to flavin adenine dinucleotide (FAD) and subsequently transferred via two heme molecules to molecular oxygen, producing superoxide through an outer-sphere reaction. Activation of the NADPH oxidase complex is initiated by the assembly of cytosolic subunits of the NADPH oxidase complex with the core NADPH oxidase complex to form a complex at the plasma membrane or phagosomal membrane. This activation process is initiated by phosphorylation dependent binding of the cytosolic NCF1/p47-phox subunit to the C-terminus of CYBA/p22-phox. Aassociates with NOX3 to form a functional NADPH oxidase constitutively generating superoxide. The sequence is that of Cytochrome b-245 light chain from Oryctolagus cuniculus (Rabbit).